A 197-amino-acid chain; its full sequence is MGSVRETQLRWAILGFLLLQAASETPSQFSTEAMTLSSSTVADHLPSSPGPTWSQSQKHTSGLSADVPSSGRSSDSMSGDTSHNVTSTSPNMSFRTTADSTVPPSPTSETVLTVAAFGVISFIAILVVVVIVLVSVVSLRFKCRKNKESEDPQKPGSSGLSESGSTANGEKESITLISMKNINMNNSKGCPSAEKVL.

The first 23 residues, 1–23 (MGSVRETQLRWAILGFLLLQAAS), serve as a signal peptide directing secretion. Residues 24-113 (ETPSQFSTEA…PSPTSETVLT (90 aa)) lie on the Extracellular side of the membrane. Positions 40-107 (TVADHLPSSP…ADSTVPPSPT (68 aa)) are disordered. Residues 50 to 63 (GPTWSQSQKHTSGL) show a composition bias toward polar residues. A compositionally biased stretch (low complexity) spans 64 to 82 (SADVPSSGRSSDSMSGDTS). Over residues 83–107 (HNVTSTSPNMSFRTTADSTVPPSPT) the composition is skewed to polar residues. The chain crosses the membrane as a helical span at residues 114 to 134 (VAAFGVISFIAILVVVVIVLV). The Cytoplasmic segment spans residues 135 to 197 (SVVSLRFKCR…KGCPSAEKVL (63 aa)). Disordered stretches follow at residues 146–172 (NKESEDPQKPGSSGLSESGSTANGEKE) and 178–197 (SMKNINMNNSKGCPSAEKVL). 2 stretches are compositionally biased toward polar residues: residues 155 to 168 (PGSSGLSESGSTAN) and 178 to 189 (SMKNINMNNSKG). Ser187 carries the phosphoserine modification.

It belongs to the ECSCR family. Interacts with FLNA. Interacts with the 20S proteasome subunit PSMA7. In terms of processing, may be heavily O-glycosylated.

It is found in the cell membrane. The protein localises to the cytoplasm. Its function is as follows. Regulates endothelial chemotaxis and tube formation. Has a role in angiogenesis and apoptosis via modulation of the actin cytoskeleton and facilitation of proteasomal degradation of the apoptosis inhibitors BIRC3/IAP1 and BIRC2/IAP2. The protein is Endothelial cell-specific chemotaxis regulator (ECSCR) of Bos taurus (Bovine).